The chain runs to 417 residues: uncharacterized protein (417 aa).

An N-terminal signal peptide occupies residues 1–21 (MPYYWGAILIGGVFLAGCTQN).

This is an uncharacterized protein from Methanocaldococcus jannaschii (strain ATCC 43067 / DSM 2661 / JAL-1 / JCM 10045 / NBRC 100440) (Methanococcus jannaschii).